Here is a 576-residue protein sequence, read N- to C-terminus: Arginine--tRNA ligase (576 aa).

Residues 132-142 (ANPTGPMHIGH) carry the 'HIGH' region motif.

This sequence belongs to the class-I aminoacyl-tRNA synthetase family. Monomer.

It localises to the cytoplasm. It carries out the reaction tRNA(Arg) + L-arginine + ATP = L-arginyl-tRNA(Arg) + AMP + diphosphate. This chain is Arginine--tRNA ligase, found in Ehrlichia ruminantium (strain Welgevonden).